Consider the following 59-residue polypeptide: Large ribosomal subunit protein bL32 (59 aa).

Positions 1–20 (MAVPRNRHSNARKNIRRSHH) are disordered.

Belongs to the bacterial ribosomal protein bL32 family.

In Chlamydia trachomatis serovar A (strain ATCC VR-571B / DSM 19440 / HAR-13), this protein is Large ribosomal subunit protein bL32.